We begin with the raw amino-acid sequence, 630 residues long: A-type voltage-gated potassium channel KCND2 (630 aa).

At 1-184 (MAAGVAAWLP…FENPHTSTMA (184 aa)) the chain is on the cytoplasmic side. The interaction with KCNIP1, KCNIP2, and other family members stretch occupies residues 2–20 (AAGVAAWLPFARAAAIGWM). Position 38 is a phosphothreonine (threonine 38). Positions 71-90 (ERDFFYHPETQQYFFDRDPD) are interaction with KCNIP1. Zn(2+) is bound by residues histidine 105, cysteine 111, cysteine 132, and cysteine 133. The helical transmembrane segment at 185 to 206 (LVFYYVTGFFIAVSVIANVVET) threads the bilayer. Residues 207 to 226 (VPCGSSPGHIKELPCGERYA) are Extracellular-facing. A helical membrane pass occupies residues 227–249 (VAFFCLDTACVMIFTVEYLLRLA). The Cytoplasmic segment spans residues 250–256 (AAPSRYR). A helical membrane pass occupies residues 257–281 (FVRSVMSIIDVVAILPYYIGLVMTD). The Extracellular portion of the chain corresponds to 282–287 (NEDVSG). Residues 288-307 (AFVTLRVFRVFRIFKFSRHS) form a helical; Voltage-sensor membrane-spanning segment. Residues 308–321 (QGLRILGYTLKSCA) are Cytoplasmic-facing. An S4-S5 linker region spans residues 308 to 321 (QGLRILGYTLKSCA). A helical membrane pass occupies residues 322–345 (SELGFLLFSLTMAIIIFATVMFYA). Over 346–357 (EKGSSASKFTSI) the chain is Extracellular. The helical intramembrane region spans 358–369 (PAAFWYTIVTMT). K(+)-binding residues include threonine 370, leucine 371, glycine 372, and tyrosine 373. Positions 370-375 (TLGYGD) match the Selectivity filter motif. An intramembrane segment occupies 370–377 (TLGYGDMV). The Extracellular portion of the chain corresponds to 378–380 (PKT). The chain crosses the membrane as a helical span at residues 381–403 (IAGKIFGSICSLSGVLVIALPVP). Topologically, residues 404 to 630 (VIVSNFSRIY…GGNIVRVSAL (227 aa)) are cytoplasmic. At serine 438 the chain carries Phosphoserine. The required for dendritic targeting stretch occupies residues 474-489 (FETQHHHLLHCLEKTT). Residues 474–630 (FETQHHHLLH…GGNIVRVSAL (157 aa)) are important for normal channel activation and inactivation, for interaction with KCNIP2, and probably other family members as well. A phosphoserine mark is found at serine 548, serine 552, serine 572, and serine 575. Residues 600–630 (IPTPPVTTPEGDDRPESPEYSGGNIVRVSAL) are disordered. Phosphothreonine occurs at positions 602 and 607. The residue at position 616 (serine 616) is a Phosphoserine. The short motif at 627–630 (VSAL) is the PDZ-binding element.

This sequence belongs to the potassium channel family. D (Shal) (TC 1.A.1.2) subfamily. Kv4.2/KCND2 sub-subfamily. As to quaternary structure, homotetramer or heterotetramer with KCND1 or KCND3. Associates with the regulatory subunits KCNIP2, KCNIP3 and KCNIP4. Interacts with the regulatory subunit KCNIP1; this interaction mediates the capture of both the N- and C-terminus of KCND2, preventing N-type inactivation and stabilizing the S6 conformation, thereby accelerating closed state inactivation and recovery. In vivo, probably exists as heteromeric complex containing variable proportions of KCND1, KCND2, KCND3, KCNIP1, KCNIP2, KCNIP3, KCNIP4, DPP6 and DPP10. The tetrameric channel can associate with up to four regulatory subunits, such as KCNIP2 or KCNIP4. Interaction with four KCNIP4 chains does not reduce interaction with DPP10. Interacts with DLG4 and NCS1/FREQ. Interacts with DLG1. Probably part of a complex consisting of KCNIP1, KCNIP2 isoform 3 and KCND2. Interacts with FLNA, FLNC and DPP10. Interacts (via S1 and S2 helices) with DPP6; this interaction stabilizes the conformation of the S1-S2 helices and facilitates S4 conformational change, including S4 sliding up and down, thereby accelerating activation, inactivation, and recovery. In terms of processing, phosphorylation at Ser-438 in response to MAPK activation is increased in stimulated dendrites. Interaction with KCNIP2 and DPP6 propomtes phosphorylation by PKA at Ser-552. Phosphorylation at Ser-552 has no effect on interaction with KCNIP3, but is required for the regulation of channel activity by KCNIP3. Phosphorylation at Ser-552 leads to KCND2 internalization. Phosphorylated by MAPK in response to signaling via the metabotropic glutamate receptor GRM5. Phosphorylation at Ser-616 is required for the down-regulation of neuronal A-type currents in response to signaling via GRM5. In terms of tissue distribution, detected in ovary, in corpus luteum and in granulosa and theca cells in the follicle (at protein level). Highly expressed throughout the brain. Detected in amygdala, caudate nucleus, cerebellum, hippocampus, substantia nigra and thalamus. Expression is not detectable or very low in heart, kidney, liver, lung, pancreas and skeletal muscle. Not detectable in human heart atrium.

It localises to the cell membrane. Its subcellular location is the cell projection. The protein localises to the dendrite. It is found in the synapse. The protein resides in the perikaryon. It localises to the postsynaptic cell membrane. Its subcellular location is the dendritic spine. The protein localises to the cell junction. The catalysed reaction is K(+)(in) = K(+)(out). Its function is as follows. Voltage-gated potassium channel that mediates transmembrane potassium transport in excitable membranes, primarily in the brain. Mediates the major part of the dendritic A-type current I(SA) in brain neurons. This current is activated at membrane potentials that are below the threshold for action potentials. It regulates neuronal excitability, prolongs the latency before the first spike in a series of action potentials, regulates the frequency of repetitive action potential firing, shortens the duration of action potentials and regulates the back-propagation of action potentials from the neuronal cell body to the dendrites. Contributes to the regulation of the circadian rhythm of action potential firing in suprachiasmatic nucleus neurons, which regulates the circadian rhythm of locomotor activity. Functions downstream of the metabotropic glutamate receptor GRM5 and plays a role in neuronal excitability and in nociception mediated by activation of GRM5. Mediates the transient outward current I(to) in rodent heart left ventricle apex cells, but not in human heart, where this current is mediated by another family member. Forms tetrameric potassium-selective channels through which potassium ions pass in accordance with their electrochemical gradient. The channel alternates between opened and closed conformations in response to the voltage difference across the membrane. Can form functional homotetrameric channels and heterotetrameric channels that contain variable proportions of KCND2 and KCND3; channel properties depend on the type of pore-forming alpha subunits that are part of the channel. In vivo, membranes probably contain a mixture of heteromeric potassium channel complexes. Interaction with specific isoforms of the regulatory subunits KCNIP1, KCNIP2, KCNIP3 or KCNIP4 strongly increases expression at the cell surface and thereby increases channel activity; it modulates the kinetics of channel activation and inactivation, shifts the threshold for channel activation to more negative voltage values, shifts the threshold for inactivation to less negative voltages and accelerates recovery after inactivation. Likewise, interaction with DPP6 or DPP10 promotes expression at the cell membrane and regulates both channel characteristics and activity. Upon depolarization, the channel goes from a resting closed state (C state) to an activated but non-conducting state (C* state), from there, the channel may either inactivate (I state) or open (O state). The chain is A-type voltage-gated potassium channel KCND2 from Homo sapiens (Human).